The primary structure comprises 58 residues: Light-harvesting protein B-875 alpha chain (58 aa).

Residues 1 to 15 (MSKFYKIWMIFDPRR) are Cytoplasmic-facing. A helical membrane pass occupies residues 16–36 (VFVAQGVFLFLLAVMIHLILL). Residue histidine 32 coordinates a bacteriochlorophyll. Residues 37-58 (STPSYNWLEISAAKYNRVAVAE) are Periplasmic-facing.

This sequence belongs to the antenna complex alpha subunit family. In terms of assembly, the core complex is formed by different alpha and beta chains, binding bacteriochlorophyll molecules, and arranged most probably in tetrameric structures disposed around the reaction center. The non-pigmented gamma chains may constitute additional components.

Its subcellular location is the cell inner membrane. Its function is as follows. Antenna complexes are light-harvesting systems, which transfer the excitation energy to the reaction centers. This is Light-harvesting protein B-875 alpha chain (pufA) from Cereibacter sphaeroides (strain ATCC 17023 / DSM 158 / JCM 6121 / CCUG 31486 / LMG 2827 / NBRC 12203 / NCIMB 8253 / ATH 2.4.1.) (Rhodobacter sphaeroides).